The sequence spans 435 residues: Zinc finger and BTB domain-containing protein 25 (435 aa).

A BTB domain is found at 1-107 (MDTASHSLVL…GIRFLHADYL (107 aa)). Glycyl lysine isopeptide (Lys-Gly) (interchain with G-Cter in SUMO2) cross-links involve residues Lys-142, Lys-148, Lys-198, and Lys-204. Residues 238-260 (HLCHYCGERFDSRSNLRQHLHTH) form a C2H2-type 1 zinc finger. Residues Lys-303 and Lys-330 each participate in a glycyl lysine isopeptide (Lys-Gly) (interchain with G-Cter in SUMO2) cross-link. The segment at 349-371 (MSCTICGHKFPRKSQLLEHMYTH) adopts a C2H2-type 2 zinc-finger fold. Lys-405 participates in a covalent cross-link: Glycyl lysine isopeptide (Lys-Gly) (interchain with G-Cter in SUMO2).

In terms of tissue distribution, expressed mainly in hematopoietic cells and testis.

It is found in the nucleus. In terms of biological role, may be involved in transcriptional regulation. This Homo sapiens (Human) protein is Zinc finger and BTB domain-containing protein 25 (ZBTB25).